The primary structure comprises 465 residues: Protein Loquacious (465 aa).

Residues 1-337 (MDQENFHGSS…DSICGELEGE (337 aa)) are necessary for enhancing pre-miRNA processing by Dcr-1. The tract at residues 1 to 379 (MDQENFHGSS…TLKNATGKKL (379 aa)) is not required for interaction with Dcr-1. Residues 1-392 (MDQENFHGSS…QKTCLKNNKI (392 aa)) are important for homodimerization and interaction with Dcr-1. The tract at residues 129–211 (NGLAMKTPVS…DKLIGAQLPE (83 aa)) is sufficient for binding RNA. The segment at 129-322 (NGLAMKTPVS…WMRLQETPID (194 aa)) is necessary for promoting preferential binding of Dcr-2 to the less stably base paired ends of siRNAs. The region spanning 135 to 206 (TPVSILQELL…ARALIDKLIG (72 aa)) is the DRBM 1 domain. The enables simultaneous binding of both DRBM 1 and 2 domains to dsRNA stretch occupies residues 209-249 (LPESPSSSAGPSVTGLTVAGSGGDGNANATGGGDASDKTVG). The segment at 210–246 (PESPSSSAGPSVTGLTVAGSGGDGNANATGGGDASDK) is disordered. Positions 211–223 (ESPSSSAGPSVTG) are enriched in polar residues. The tract at residues 220–465 (SVTGLTVAGS…LEYLKIMTKK (246 aa)) is necessary and sufficient for enhancing processing of pre-miRNAs by Dcr-1. Over residues 228–242 (GSGGDGNANATGGGD) the composition is skewed to gly residues. Residues 245–322 (DKTVGNPIGW…WMRLQETPID (78 aa)) are sufficient for binding RNA. A DRBM 2 domain is found at 250–318 (NPIGWLQEMC…AHRMWMRLQE (69 aa)). A necessary for binding pre-miRNA region spans residues 308 to 309 (AA). A required for binding to Dcr-2 and to fully enhance Dcr-2 mediated cleavage of 3' overhanging termini (3'ovr) and blunt termini (BLT) dsRNAs. However, this region is dispensable for binding the dsRNA substrates region spans residues 338 to 359 (PRSSENYYGELKDISVPTLTTQ). The segment at 340–465 (SSENYYGELK…LEYLKIMTKK (126 aa)) is necessary for interaction with Dcr-1. The interval 392–463 (IDYIKLLGEI…NALEYLKIMT (72 aa)) is sufficent for binding to Dcr-1. The 69-residue stretch at 393 to 461 (DYIKLLGEIA…AQNALEYLKI (69 aa)) folds into the DRBM 3 domain.

As to quaternary structure, homodimer. In terms of assembly, interacts with dicer enzyme Dcr-1. Component of the miRNA-directed RNA-induced loading complex (miRLC), composed of at least Dcr-1, AGO1 and loqs isoform PB (loqs-PB), which processes pre-miRNAs and loads the resulting miRNAs into the Argonaute 1 (AGO1)-containing RNA-induced silencing complex (miRISC) to target the selective destruction of homologous RNAs. Interacts (via DRBM 3 domain) with dicer enzyme Dcr-1 (via helicase domain). Different regions of the Dcr-1-loqs-PB heterodimer collaborate to recognize, bind and position the pre-miRNA for Dcr-1 mediated cleavage. In the absence of miRNA substrates, the heterodimer favors a closed, catalytically incompetent, conformation, whereas binding of authentic pre-miRNA substrates stabilizes the relatively rare open, catalytically competent, conformation of the heterodimer. During substrate recognition, the Dcr-1 PAZ domain and pre-miRNA interact with the DRBM 1 domain of loqs-PB, which likely contributes to substrate recognition and stabilization. At the miRNA binding stage, the Dcr-1 DRBM domain and the loqs-PB DRBM domains then bind the pre-miRNA in tandem to form a tight 'belt' around the pre-miRNA stem, the pre-miRNA loop is docked in the loop-binding region formed by DUF283, DRBM and part of the helicase domain of Dcr-1, and the loqs-PB DRBM 1 and the wing domain of Dcr-1 act together to bind the 5' and 3' pre-miRNA termini within the PAZ and platform domains of Dcr-1. These interactions between the proteins and their pre-miRNA substrate stabilize a distorted form of the pre-miRNA and position the scissile phosphodiester bonds of the pre-miRNA at the RNase III catalytic cleavage sites of Dcr-1. Following Dcr-1 mediated cleavage, the miRNA duplex remains bound to loqs-PB DRBM 1, which dissociates from the Dcr-1 RNase III 1 domain but remains in contact with the PAZ and wing domains suggesting that the heterodimer presents the mature miRNA to AGO2 for loading into the RNA-induced silencing complex (miRISC). As to quaternary structure, able to interact with dicer enzyme Dcr-1. However, the relevance of such an interaction is unclear in vivo and another report found that it did not interact with Dcr-1. In terms of assembly, monomer. Interacts (via C-terminus) with dicer enzyme Dcr-2 (via N-terminus); interaction is required for RNAi activity in producing siRNAs from a subset of endo- and exo-dsRNAs, and in the alternative siRLC, the interaction enhances the binding preference of the protein for the thermodynamically more stable ends of endogenous siRNAs. Interaction with Dcr-2 is RNA independent, however the isoform must bind both dsRNA and Dcr-2 to enhance Dcr-2 cleavage activity. Does not interact with Dcr-1. As to expression, strong expression in males and females. Expression in ovaries is relatively weak. In terms of tissue distribution, strong expression in females and relatively weak expression in males. Strong expression in ovaries.

The protein localises to the cytoplasm. It is found in the cytosol. In terms of biological role, double-stranded RNA-binding protein which can function in gene silencing by acting with Dcr-1 to enhance its ATP-independent processing of a specific subset of precursor micro-RNAs (pre-miRNAs) to mature miRNAs. Some reports found it was able to enhance the efficiency of pre-miRNA processing by Dcr-1, and can shift the cleavage site of Dcr-1 altering the length of the mature miRNAs produced by Dcr-1 alone. However, in contrast to isoform PB, it is not necessary or sufficient for enhancing miRNA biogenesis, and is not required for development or female germline stem cell (GSC) maintenance. Another report also found that it decreases binding of Dcr-1 to the miRNA substrate let-7. Its function is as follows. Double-stranded RNA-binding protein which functions in gene silencing by acting with Dcr-1 to enhance its ATP-independent processing of a specific subset of precursor micro-RNAs (pre-miRNAs) to mature miRNAs. Function is essential for development and female germline stem cell (GSC) maintenance. Functions in miRNA-mediated gene silencing by enhancing the binding affinity and specific pre-miRNA processing activity of Dcr-1, and as part of the loqs-PB-Dcr-1 complex, is involved in substrate discrimination, correctly positioning the pre-miRNA in the Dcr-1 catalytic center for cleavage, and miRNA loading into the Argonaute 1 (Ago1)-containing RNA-induced silencing complex (miRISC). Increases the binding affinity of Dcr-1 to pre-miRNAs, thereby increasing dicing efficiency and broadening the range of substrates that can be processed by the dicer. It may also confer the substrate specificity of Dcr-1 towards pre-miRNAs, as in its absence Dcr-1 displays siRNA-generating activity towards long dsRNA substrates. It can also shift the cleavage site of Dcr-1 for a small number of pre-miRNAs, changing the length of the mature miRNAs produced by Dcr-1 alone. Increases the range of pre-miRNAs that can be processed by Dcr-1, by enhancing the dicing of suboptimal hairpin substrates including ones with mismatches at the dicing site. This function may also promote the generation of novel miRNA genes as it appears to have an important role in processing evolutionarily young miRNA genes, suggesting that it may also enhance dicing of substrates that have not acquired hairpin features required for efficient miRNA processing. As newly emerged miRNAs can have deleterious or beneficial effects on fitness, this function is likely part of a regulatory system that prevents excessive emergence of active miRNA genes and thus keeps them within an optimal range. Also forms a RISC loading complex (miRLC) with Dcr-1 to mediate Ago1-loading of mature miRNAs into the RNA-induced silencing complex (miRISC). In female ovaries, required for Dcr-1 to generate the twenty-three nucleotide isomiR variant of miR-307a which is able to repress its targets Gk2 and tara. Functionally, double-stranded RNA-binding protein which has an essential role in gene silencing (RNAi) by acting with Dcr-2 to enhance its ATP-dependent processing of a subset of endogenous (endo) and exogenous (exo) dsRNAs into short interfering RNAs (siRNAs). Functions in RNAi by increasing the initial binding affinity of Dcr-2 to certain dsRNA substrates, and in the absence of r2d2, may also function in siRNA loading into the Argonaute 2 (AGO2)-containing RNA-induced silencing complex (siRISC) and guide strand selection for target silencing by the siRISC. Promotes Dcr-2 cleavage of a subset of dsRNAs, including endo-dsRNAs derived from convergent transcription, inverted repeats and transposons. Also enables Dcr-2 to produce hairpin-derived endo-siRNAs in the presence of cellular inhibitory inorganic phosphate, likely by increasing the binding affinity of the enzyme to the hairpin dsRNAs allowing the dsRNA to displace phosphate bound to Dcr-2. According to many reports, the cleavage reaction mode of Dcr-2 changes according to the termini of the dsRNA substrate, with the enzyme displaying a preference for processing blunt termini (BLT), likely non-self dsRNAs, over dsRNAs with 2 nucleotides 3' overhanging (3'ovr) termini, which are typically the structure of endo-dsRNAs. According to many reports, interaction with Loqs-PD modifies the molecular recognition mechanisms of Dcr-2 towards sub-optimal 3'ovr dsRNA substrates and thus enables the dicer to cleave endo-dsRNA templates with diverse termini. However, according to another report, the mode of cleavage reaction is not affected by the presence or absence of loqs-PD. In the absence of r2d2, may also form an alternative RISC loading complex (siRLC) with Dcr-2 to mediate AGO2-loading of endo- and exo-siRNAs into the RNA-induced silencing complex (siRISC). Many reports suggest that loqs-PD and r2d2 function independently with dcr-2 in distinct siRNA pathways, and may even compete for binding to the enzyme. Loaded siRNAs serve as a guide to direct the siRISC to complementary RNAs to degrade them or prevent their translation. The siRLC plays an important role in the ATP-dependent asymmetry sensing of the duplex, and is therefore also responsible for the selection of the strand that ultimately acts as the guide siRNA for the siRISC. Thermodynamically asymmetric endo-siRNAs can be pre-oriented in the siRLC by the Loqs-PD and DCr-2 complex, which preferentially binds to the most thermodynamically stable strand prior to loading into the siRISC. Appears to be involved in promoting double-strand breaks (DSBs) following exposure to a low-dose/dose-rate (LDR) of ionizing radiation. This chain is Protein Loquacious, found in Drosophila melanogaster (Fruit fly).